Consider the following 295-residue polypeptide: uncharacterized protein (295 aa).

A compositionally biased stretch (basic residues) spans 57–67 (RKLLVKQKRKS). A disordered region spans residues 57–94 (RKLLVKQKRKSNKEFQSNIIKKRKDEERKGTLKTEQAN). The span at 79-88 (RKDEERKGTL) shows a compositional bias: basic and acidic residues. 2 coiled-coil regions span residues 87–116 (TLKT…YDQY) and 259–286 (DVLT…LGER).

It localises to the nucleus. This is an uncharacterized protein from Schizosaccharomyces pombe (strain 972 / ATCC 24843) (Fission yeast).